Reading from the N-terminus, the 168-residue chain is Endoribonuclease YbeY (168 aa).

Zn(2+) is bound by residues histidine 123, histidine 127, and histidine 133.

This sequence belongs to the endoribonuclease YbeY family. It depends on Zn(2+) as a cofactor.

It is found in the cytoplasm. In terms of biological role, single strand-specific metallo-endoribonuclease involved in late-stage 70S ribosome quality control and in maturation of the 3' terminus of the 16S rRNA. The chain is Endoribonuclease YbeY from Francisella tularensis subsp. tularensis (strain SCHU S4 / Schu 4).